Consider the following 389-residue polypeptide: tRNA pseudouridine synthase Pus10 (389 aa).

Asp213 (nucleophile) is an active-site residue. Tyr278 and Tyr350 together coordinate substrate.

It belongs to the pseudouridine synthase Pus10 family.

It catalyses the reaction uridine(54) in tRNA = pseudouridine(54) in tRNA. The catalysed reaction is uridine(55) in tRNA = pseudouridine(55) in tRNA. Functionally, responsible for synthesis of pseudouridine from uracil-54 and uracil-55 in the psi GC loop of transfer RNAs. The chain is tRNA pseudouridine synthase Pus10 from Thermoplasma acidophilum (strain ATCC 25905 / DSM 1728 / JCM 9062 / NBRC 15155 / AMRC-C165).